The chain runs to 144 residues: Cysteine-rich tail protein 1 (144 aa).

Residues 51–105 (APEPTHLLQPTEVPGPKGAKGNQGAAPIQNQQAWQQPGNPYSSSQRQAGLTYAGP) form a disordered region. Residues 78–98 (IQNQQAWQQPGNPYSSSQRQA) show a composition bias toward polar residues.

It belongs to the CYSRT1 family. As to quaternary structure, interacts with LCE1B; the interaction is direct. Interacts with LCE2C; the interaction is direct. Interacts with LCE3A; the interaction is direct. Interacts with LCE3C; the interaction is direct. Interacts with LCE4A; the interaction is direct. Interacts with LCE5A; the interaction is direct. Interacts with LCE1C. Interacts with LCE1D. Interacts with LCE1E. Interacts with LCE2A. Interacts with LCE3D. Interacts with LCE3E. Interacts with LCE1A. Expressed in the stratum granulosum, in skin and oral epithelia (at protein level).

Its subcellular location is the cornified envelope. Component of the stratum corneum that may contribute to epidermal antimicrobial host defenses. In Homo sapiens (Human), this protein is Cysteine-rich tail protein 1 (CYSRT1).